The following is a 295-amino-acid chain: Protease Rv3090 (295 aa).

A run of 2 helical transmembrane segments spans residues 2-22 and 37-57; these read TWQI…ALFW and VTIA…FTIV.

The protein resides in the cell membrane. The protein localises to the secreted. Its subcellular location is the cell wall. In terms of biological role, protease that triggers late cell apoptosis and contributes to the pathogenicity and dissemination of M.tuberculosis. In a mouse model of infection, can induce hepatocyte and lung cell apoptosis and cause pathological damage to the spleen, liver and lungs. Specifically stimulates the secretion of inflammatory cytokines including TNF-alpha, IL-6 and IL-1 beta. Can degrade casein in vitro. The sequence is that of Protease Rv3090 from Mycobacterium tuberculosis (strain ATCC 25618 / H37Rv).